The chain runs to 990 residues: MSDTEKSAQAQPNESAEPSFRYNAKLAQGIEEKWQKIWDDEGTFWAANVNGDLKDGKGHNAEGRPSYFAMDMFPYPSGKGLHVGHPLGYLATDVVSRYHRMKGENVLHAMGYDAFGLPAEQYAVQTGQHPRITTEQNIANMRRQLHRMGLSFDNRRSFATIDPGYVRWTQWIFSRIYDAWYDEDATNPSGSRGCARPISTLVEQFESGKRAIPGFEGKAWADLSEAEQADVLNDFRLAYISKSPVNWCPGLGTVLANEEVTAEGKSERGNFPVFQRELRQWSMRITAYGHRLIEDLDTIDWPEKVKLMQRNWIGESHGASVHFDVETPNGVKDMEIYTTRPDTLFGTTFAVVSPEHHLLEDVPAEWPAETPEDWKGGYATPVEAVKAYRLAAEAKTAKDRVDEAGEKTGLFTGLYAINPITGAKLPLFTADYVLMDYGTGAIMAVPGGDQRDYDFAVKFGLPVIYTVKPLPESGDDLANYEGKAPFVSHDGIVINSSIDATKAKGDSLSLDGLRVDEAIDKVNAWLESAGVGKGTVSYRLRDWLFSRQRYWGEPFPIVYGEDGTPHLLPDEQLPINLPDVPDYSPKTFDPEDAESDPEAPLSRNEDWVKVELDLGDGKKTYYRDTNTMPNWAGSCWYYMRYLDPTDTKHMVEKDEFDYWMGPDHNKTAGKSGGVDLYIGGVEHAVLHLLYSRFWHKVLFDLGYVDSMEPFHKLFNQGMIQAYAYTDDRGQYVPAAEVVEGPADANGEPTFTWNGQHANREFGKMGKSLKNIITPDDMYENYGADTFRLYEMGMGPLAESRPWNTRNVVGSMRFLQRLWRNVIDETTGEVRVTDGELDTKTLKLLNNTIADVTVEMEAMRPNTAIAKLIVLNNHLTSLDAVPRAAVEPLILMLSPIAPHICEELWSKLGHTESLAHADWPKADERYVGQDSVTAVVQIKGKVRAKLEVSPDIDPKELEKMALEAVADRLGGKEPRKVIVKAPKIVSIVPAE.

Positions 74–85 (PYPSGKGLHVGH) match the 'HIGH' region motif. The segment at 573-602 (LPINLPDVPDYSPKTFDPEDAESDPEAPLS) is disordered. The short motif at 763-767 (KMGKS) is the 'KMSKS' region element. Lys766 contacts ATP.

Belongs to the class-I aminoacyl-tRNA synthetase family.

Its subcellular location is the cytoplasm. The enzyme catalyses tRNA(Leu) + L-leucine + ATP = L-leucyl-tRNA(Leu) + AMP + diphosphate. The chain is Leucine--tRNA ligase from Bifidobacterium adolescentis (strain ATCC 15703 / DSM 20083 / NCTC 11814 / E194a).